Consider the following 194-residue polypeptide: MNLIPTVVEKNARGERSYDIFSRLLKERIIFVTGKIEDYMANLIIAQMIFLESEDPEKDIFLYINSPGGVVTSGMSIYDTMQFIKCEVSTLCIGQSSSMAALILASGEKGKRFSLPNARIMIHQPLGGSQGQATDIAIHTTEILKIKKCMIELLSKHTGQSAEIISKDTERDRFFSGSEAVIYGLIDKVITCRK.

Ser-98 functions as the Nucleophile in the catalytic mechanism. Residue His-123 is part of the active site.

Belongs to the peptidase S14 family. As to quaternary structure, fourteen ClpP subunits assemble into 2 heptameric rings which stack back to back to give a disk-like structure with a central cavity, resembling the structure of eukaryotic proteasomes.

The protein resides in the cytoplasm. It catalyses the reaction Hydrolysis of proteins to small peptides in the presence of ATP and magnesium. alpha-casein is the usual test substrate. In the absence of ATP, only oligopeptides shorter than five residues are hydrolyzed (such as succinyl-Leu-Tyr-|-NHMec, and Leu-Tyr-Leu-|-Tyr-Trp, in which cleavage of the -Tyr-|-Leu- and -Tyr-|-Trp bonds also occurs).. Cleaves peptides in various proteins in a process that requires ATP hydrolysis. Has a chymotrypsin-like activity. Plays a major role in the degradation of misfolded proteins. The sequence is that of ATP-dependent Clp protease proteolytic subunit from Wigglesworthia glossinidia brevipalpis.